Consider the following 306-residue polypeptide: Deoxyribokinase (306 aa).

Substrate contacts are provided by residues 10-12 (MVD), 38-42 (GKGAN), and glutamate 139. ATP contacts are provided by residues asparagine 184 and 220–225 (TMGEKG). 2 residues coordinate K(+): aspartate 246 and serine 248. 251 to 252 (GD) provides a ligand contact to ATP. Aspartate 252 is a substrate binding site. The active-site Proton acceptor is aspartate 252. Positions 282, 285, 287, and 291 each coordinate K(+).

It belongs to the carbohydrate kinase PfkB family. Deoxyribokinase subfamily. Homodimer. Requires Mg(2+) as cofactor.

Its subcellular location is the cytoplasm. The catalysed reaction is 2-deoxy-D-ribose + ATP = 2-deoxy-D-ribose 5-phosphate + ADP + H(+). Its function is as follows. Catalyzes the ATP-dependent phosphorylation of 2-deoxy-D-ribose to 2-deoxy-D-ribose 5-phosphate (dRib-5P), allowing the use of deoxyribose as the sole carbon source. Can also use D-ribose, with much lower efficiency. This Salmonella typhi protein is Deoxyribokinase.